Consider the following 202-residue polypeptide: Glycerol-3-phosphate acyltransferase (202 aa).

Helical transmembrane passes span 2–22, 51–71, 80–100, 116–136, 137–157, and 158–178; these read INLL…AVVV, KAAI…VLLA, VDET…LFPL, ILFA…LIIA, FFFR…PFFY, and VLMN…VLLI.

This sequence belongs to the PlsY family. In terms of assembly, probably interacts with PlsX.

It is found in the cell inner membrane. The enzyme catalyses an acyl phosphate + sn-glycerol 3-phosphate = a 1-acyl-sn-glycero-3-phosphate + phosphate. Its pathway is lipid metabolism; phospholipid metabolism. Functionally, catalyzes the transfer of an acyl group from acyl-phosphate (acyl-PO(4)) to glycerol-3-phosphate (G3P) to form lysophosphatidic acid (LPA). This enzyme utilizes acyl-phosphate as fatty acyl donor, but not acyl-CoA or acyl-ACP. In Cupriavidus metallidurans (strain ATCC 43123 / DSM 2839 / NBRC 102507 / CH34) (Ralstonia metallidurans), this protein is Glycerol-3-phosphate acyltransferase.